Reading from the N-terminus, the 539-residue chain is Phospho-2-dehydro-3-deoxyheptonate aldolase 2, chloroplastic (539 aa).

2 disordered regions span residues 1-23 (MALA…SAPQ) and 41-70 (VHAA…APEK). A chloroplast-targeting transit peptide spans 1 to 54 (MALATNSAAVSGGAAAAASSAPQPRLAATFLPMRRRTVSAVHAADPAKSNGPVQ). Residues 7–21 (SAAVSGGAAAAASSA) show a composition bias toward low complexity.

This sequence belongs to the class-II DAHP synthase family.

Its subcellular location is the plastid. It is found in the chloroplast. It catalyses the reaction D-erythrose 4-phosphate + phosphoenolpyruvate + H2O = 7-phospho-2-dehydro-3-deoxy-D-arabino-heptonate + phosphate. Its pathway is metabolic intermediate biosynthesis; chorismate biosynthesis; chorismate from D-erythrose 4-phosphate and phosphoenolpyruvate: step 1/7. The sequence is that of Phospho-2-dehydro-3-deoxyheptonate aldolase 2, chloroplastic (DAHPS2) from Oryza sativa subsp. japonica (Rice).